Consider the following 511-residue polypeptide: 2'-acyl-2-O-sulfo-trehalose (hydroxy)phthioceranyltransferase PapA1 (511 aa).

The protein belongs to the PapA acyltransferase family.

It carries out the reaction a (hydroxy)phthioceranyl-[(hydroxy)phthioceranic acid synthase] + 2'-palmitoyl/stearoyl-2-O-sulfo-alpha,alpha-trehalose = a 3'-(hydroxy)phthioceranyl-2'-palmitoyl/stearoyl-2-O-sulfo-alpha,alpha-trehalose + holo-[(hydroxy)phthioceranic acid synthase].. Functionally, required for the biosynthesis of sulfolipid-1 (SL-1), a major mycobacterial cell wall lipid. Catalyzes the acylation of trehalose-2-sulfate-2'-palmitate (SL659) by adding the (hydroxy)phthioceranoyl group at the 3'-position to yield the diacylated intermediate 2-palmitoyl-3-(C43)-phthioceranyl-alpha, alpha'-D-trehalose-2'-sulfate (SL1278). This is 2'-acyl-2-O-sulfo-trehalose (hydroxy)phthioceranyltransferase PapA1 (papA1) from Mycobacterium tuberculosis (strain CDC 1551 / Oshkosh).